The sequence spans 305 residues: Phosphatidylinositol:ceramide inositolphosphotransferase 2 (305 aa).

6 helical membrane-spanning segments follow: residues 34-54 (LLAG…VHYI), 81-101 (ETVF…PFIL), 105-125 (KIYT…CQFL), 168-188 (VMYG…LVFV), 198-218 (RFIK…IIAS), and 221-241 (HYSV…FCLD). His-180 is an active-site residue. Residues His-221 and Asp-225 contribute to the active site.

Belongs to the sphingomyelin synthase family. As to expression, expressed in leaves, roots, stems, flowers and siliques.

The protein resides in the golgi apparatus. Its subcellular location is the trans-Golgi network membrane. The catalysed reaction is an N-(2R-hydroxy-very-long-chain fatty acyl)-(R)-4-hydroxysphingoid base + a 1,2-diacyl-sn-glycero-3-phospho-(1D-myo-inositol) = a 1D-myo-inositol-1-phospho-N-[(R)-2-hydroxy-very-long-chain fatty acyl]-(R)-4-hydroxysphingoid base + a 1,2-diacyl-sn-glycerol. Its pathway is sphingolipid metabolism. Functionally, catalyzes the transfer of the phosphorylinositol group from phosphatidylinositol (PI) to phytoceramide, an essential step in sphingolipid biosynthesis. May play an important role in modulating plant programmed cell death (PCD) associated with defense (e.g. toward Golovinomyces cichoracearum) by promoting sphingolipid metabolism and thus regulating ceramide accumulation. This chain is Phosphatidylinositol:ceramide inositolphosphotransferase 2, found in Arabidopsis thaliana (Mouse-ear cress).